The sequence spans 383 residues: uncharacterized protein (383 aa).

The protein belongs to the peptidase M20 family.

This is an uncharacterized protein from Staphylococcus epidermidis (strain ATCC 35984 / DSM 28319 / BCRC 17069 / CCUG 31568 / BM 3577 / RP62A).